A 513-amino-acid chain; its full sequence is Na(+)/H(+) antiporter NhaB (513 aa).

12 helical membrane-spanning segments follow: residues 23–43 (LALIIFLIVNPLIFLISPFVA), 52–72 (IFTLAMALKCYPLLPGGLLAI), 97–117 (LLLMFMVAGIYFMKQLLLFIF), 120–140 (LLLSIRSKMLLSLSFCVAAAF), 144–164 (FLDALTVVAVVISVAVGFYGI), 202–222 (LMMHAGVGTALGGVMTMVGEP), 238–258 (FFLRMSPVTVPVLICGLLTCL), 303–323 (AIIGVWLVTALALHLAEVGLI), 348–368 (TESLPFTALLTVFFSVVAVII), 391–411 (LFYIFNGLLSSISDNVFVGTI), 447–467 (ATPNGQAAFLFLLTSALAPLI), and 475–495 (VWMALPYTLVLTLVGLLCVEF).

It belongs to the NhaB Na(+)/H(+) (TC 2.A.34) antiporter family.

Its subcellular location is the cell inner membrane. It carries out the reaction 2 Na(+)(in) + 3 H(+)(out) = 2 Na(+)(out) + 3 H(+)(in). In terms of biological role, na(+)/H(+) antiporter that extrudes sodium in exchange for external protons. The protein is Na(+)/H(+) antiporter NhaB of Shigella flexneri serotype 5b (strain 8401).